The primary structure comprises 247 residues: Pulmonary surfactant-associated protein A (247 aa).

The first 19 residues, 1–19 (MWCSLALILILVTVSGIMC), serve as a signal peptide directing secretion. An N-linked (GlcNAc...) asparagine glycan is attached at Asn20. Positions 27–99 (GSPGIPGTPG…PGERGPPGLP (73 aa)) constitute a Collagen-like domain. Residues Pro29, Pro32, Pro35, Pro41, Pro53, Pro56, Pro62, Pro66, and Pro69 each carry the 4-hydroxyproline modification. A disordered region spans residues 32–101 (PGTPGSHGLP…ERGPPGLPAS (70 aa)). Residues 41-50 (PGRDGRDGVK) show a composition bias toward basic and acidic residues. Positions 53–64 (PGPPGPMGPPGV) are enriched in pro residues. A compositionally biased stretch (basic and acidic residues) spans 83-92 (ERGDKGDPGE). The region spanning 131-247 (LAVGDKVFAT…LQSRLTICEF (117 aa)) is the C-type lectin domain. 2 disulfides stabilise this stretch: Cys154-Cys245 and Cys223-Cys237. Residue Asn206 is glycosylated (N-linked (GlcNAc...) asparagine). 4 residues coordinate Ca(2+): Glu214, Arg216, Asn233, and Asp234.

The protein belongs to the SFTPA family. In terms of assembly, oligomeric complex of 6 set of homotrimers.

The protein resides in the secreted. It localises to the extracellular space. It is found in the extracellular matrix. The protein localises to the surface film. Its function is as follows. In presence of calcium ions, it binds to surfactant phospholipids and contributes to lower the surface tension at the air-liquid interface in the alveoli of the mammalian lung and is essential for normal respiration. Enhances the expression of MYO18A/SP-R210 on alveolar macrophages. The chain is Pulmonary surfactant-associated protein A (SFTPA1) from Cavia porcellus (Guinea pig).